The following is a 256-amino-acid chain: UPF0246 protein Sde_3824 (256 aa).

It belongs to the UPF0246 family.

The sequence is that of UPF0246 protein Sde_3824 from Saccharophagus degradans (strain 2-40 / ATCC 43961 / DSM 17024).